Here is a 904-residue protein sequence, read N- to C-terminus: Disks large homolog 1 (904 aa).

An L27 domain is found at 4 to 64 (RKQDTQRALH…FYEVTLLDNP (61 aa)). Phosphothreonine is present on T115. Phosphoserine is present on residues S122, S138, and S158. An interaction with SH3 domains region spans residues 162–212 (PTEAVLPSPPTVPVIPVLPVPAENTVILPTIPQANPPPVLVNTDSLETPTY). 3 consecutive PDZ domains span residues 224–310 (EITL…VKRR), 319–405 (EIKL…VAKP), and 466–546 (KVVL…AQYR). The tract at residues 224-546 (EITLERGNSG…QAVTIVAQYR (323 aa)) is required for interaction with MARCHF2. S232 is subject to Phosphoserine. Phosphotyrosine is present on Y399. Residues S568, S573, S575, S579, S598, S619, S676, S684, S687, Q709, and S834 each carry the phosphoserine modification. Residues 581 to 651 (KRSLYVRALF…PSKRRVEKKE (71 aa)) form the SH3 domain. The disordered stretch occupies residues 662 to 693 (SKTRDKGEIPDDMGSKGLKHVTSNASDSESSY). Residues 682-693 (VTSNASDSESSY) show a composition bias toward polar residues. The 176-residue stretch at 714–889 (TRPVIILGPM…IYNQVKQIIE (176 aa)) folds into the Guanylate kinase-like domain.

Belongs to the MAGUK family. As to quaternary structure, homotetramer. Interacts (via guanylate kinase-like domain) with DLGAP1, DLGAP2, DLGAP3, DLGAP4 and MAP1A. Interacts (via guanylate kinase-like domain) with KIF13B. May interact with HTR2A. Interacts (via PDZ domains) with GRIA1. Interacts (via PDZ domains) with GRIN2A. Interacts (via PDZ domains) with KCND2 and KCND3. Interacts (via PDZ domains) with KCNA1, KCNA2, KCNA3 and KCNA4. Interacts (via PDZ domains) with ADGRA3. Interacts with KCNF1. Interacts with CAMK2. Interacts with cytoskeleton-associated protein EPB41. Interacts with cytoskeleton-associated protein EZR. Found in a complex with KCNA5 and CAV3. Found in a complex with APC and CTNNB1. Interacts (via PDZ domains) with APC. Interacts with CDH1 through binding to PIK3R1. Forms multiprotein complexes with CASK, LIN7A, LIN7B, LIN7C, APBA1, and KCNJ12. Interacts with TOPK. Forms a tripartite complex composed of DLG1, MPP7 and LIN7 (LIN7A or LIN7C). May interact with TJAP1. Interacts with PTEN. Interacts with FRMPD4 (via C-terminus). Interacts with LRFN1, LRFN2 and LRFN4. Interacts with SFPQ. Interacts (via PDZ domains) with ADGRA2 (via PDZ-binding motif). Interacts with ADAM10; this interaction recruits ADAM10 to the cell membrane during long-term depression in hippocampal neurons. Interacts with DGKI (via PDZ-binding motif). Interacts (via PDZ domains) with MARCHF2 (via PDZ domain); the interaction leads to DLG1 ubiqtuitination and degradation. Interacts (via N-terminus) with MPP3; this interaction connects CADM1 with DLG1 and links CADM1 with the regulatory subunit of phosphoinositide-3-kinase (PI3K) by forming a multiprotein complex and participates in cell spreading. In terms of assembly, (Microbial infection) Interacts with HTLV-1 protein Tax. (Microbial infection) Interacts (via PDZ domains 1 and 2) with influenza A virus protein NS1; the interaction results in the translocation of DLG1 from the cell membrane to perinuclear puncta. Acts as a scaffold protein to facilitate the interaction between LIN7C and influenza A virus protein NS1; the interaction facilitates translocation of LIN7C to cytoplasmic puncta. As to quaternary structure, (Microbial infection) Interacts with human papillomavirus 18/HPV-18 protein E6. Post-translationally, phosphorylated by MAPK12. Phosphorylation of Ser-232 regulates association with GRIN2A. Ubiquitinated; by MARCHF2 which results in its degradation. As to expression, abundantly expressed in atrial myocardium (at protein level). Expressed in lung fibroblasts, cervical epithelial and B-cells (at protein level). Expressed in the brain (at protein level). Widely expressed, with isoforms displaying different expression profiles.

The protein localises to the cell membrane. It is found in the basolateral cell membrane. The protein resides in the endoplasmic reticulum membrane. Its subcellular location is the postsynaptic density. It localises to the synapse. The protein localises to the sarcolemma. It is found in the apical cell membrane. The protein resides in the cell junction. Its subcellular location is the cytoplasm. Functionally, essential multidomain scaffolding protein required for normal development. Recruits channels, receptors and signaling molecules to discrete plasma membrane domains in polarized cells. Promotes epithelial cell layer barrier function via maintaining cell-cell adhesion. May also play a role in adherens junction assembly, signal transduction, cell proliferation, synaptogenesis and lymphocyte activation. Regulates the excitability of cardiac myocytes by modulating the functional expression of Kv4 channels. Functional regulator of Kv1.5 channel. During long-term depression in hippocampal neurons, it recruits ADAM10 to the plasma membrane. The protein is Disks large homolog 1 of Homo sapiens (Human).